A 414-amino-acid chain; its full sequence is 3-oxoacyl-[acyl-carrier-protein] synthase 2 (414 aa).

The region spanning 4 to 411 (NKRVVITGMG…GHNAVLVFKK (408 aa)) is the Ketosynthase family 3 (KS3) domain. Active-site for beta-ketoacyl synthase activity residues include Cys-165, His-304, and His-341.

The protein belongs to the thiolase-like superfamily. Beta-ketoacyl-ACP synthases family.

It catalyses the reaction a fatty acyl-[ACP] + malonyl-[ACP] + H(+) = a 3-oxoacyl-[ACP] + holo-[ACP] + CO2. The enzyme catalyses (9Z)-hexadecenoyl-[ACP] + malonyl-[ACP] + H(+) = 3-oxo-(11Z)-octadecenoyl-[ACP] + holo-[ACP] + CO2. Its pathway is lipid metabolism; fatty acid biosynthesis. Functionally, involved in the type II fatty acid elongation cycle. Catalyzes the elongation of a wide range of acyl-ACP by the addition of two carbons from malonyl-ACP to an acyl acceptor. Can efficiently catalyze the conversion of palmitoleoyl-ACP (cis-hexadec-9-enoyl-ACP) to cis-vaccenoyl-ACP (cis-octadec-11-enoyl-ACP), an essential step in the thermal regulation of fatty acid composition. The polypeptide is 3-oxoacyl-[acyl-carrier-protein] synthase 2 (fabF) (Staphylococcus aureus (strain Mu50 / ATCC 700699)).